The primary structure comprises 333 residues: Protein amalgam (333 aa).

A signal peptide spans 1–23; the sequence is MARLRLLIGLIFCLAISLDSVLS. In terms of domain architecture, Ig-like V-type spans 25 to 128; it reads PVISQISKDV…VLVSATEKVT (104 aa). Asn-45 and Asn-86 each carry an N-linked (GlcNAc...) asparagine glycan. Cystine bridges form between Cys-46-Cys-117, Cys-161-Cys-208, and Cys-251-Cys-307. 2 Ig-like C2-type domains span residues 139 to 223 and 230 to 323; these read PVIA…RLIR and PQIA…LHLF. A glycan (N-linked (GlcNAc...) asparagine) is linked at Asn-308.

It localises to the cell membrane. This chain is Protein amalgam (Ama), found in Drosophila melanogaster (Fruit fly).